Reading from the N-terminus, the 106-residue chain is Transcription initiation factor IIA subunit 2 (106 aa).

Belongs to the TFIIA subunit 2 family. In terms of assembly, TFIIA is a heterodimer of the large unprocessed subunit 1 and a small subunit gamma. It was originally believed to be a heterotrimer of an alpha, a beta and a gamma subunit.

It localises to the nucleus. TFIIA is a component of the transcription machinery of RNA polymerase II and plays an important role in transcriptional activation. TFIIA in a complex with TBP mediates transcriptional activity. This chain is Transcription initiation factor IIA subunit 2 (TFIIA-S), found in Arabidopsis thaliana (Mouse-ear cress).